The following is a 1257-amino-acid chain: MNGYVDFSPSPTSPTQEPGEPQPTQAVLQEDVDMSSGSSGNENCSTGRDSQGSDCDDSGKELRMLVESSNTHPSPDDTFRLMMTEAEHNPSTSGCSSEQSAKADAHKELIRTLRELKVHLPADKKAKGKASTLATLKYALRSVKQVKANEEYYQLLMSSESQPCSVDVPSYTMEQVEGITSEYIVKNSDMFAVAVSLVSGKILYISNQVAPIFHCKKDAFSDAKFVEFLAPHDVSVFHSYTTPYKLPPWSVSSGLDSFTQECMEEKSFFCRVSVGKHHENEIRYQPFRMTPYLVKVQEQKGAASQLCCLLLAERVHSGYEAPRIPPEKRIFTTTHTPNCLFQDVDERAVPLLGYLPQDLIETPVLVQLHPSDRPLMLAIHKKILQASGQPFDYSPIRFRTRNGEYITLDTSWSSFINPWSRKISFIIGRHKVRVGPLNEDVFAASPCPEEKTPHPSVQELTEQIHRLLMQPVPHSGSSGYGSLGSNGSHEHLMSQTSSSDSNGQEESHWRRSGIFKTSGKSQSKSHFSPESGGQKEASVAEMQSSPPAQVRSVTTMERDSSGASLPKASFPEELTYKSQPPCSYQQISCLDSVIRYLESCNEAATLKRKCEFPANIPSRKATVSPGLHSGEAARSSKVTSHTEVSAHLSSLALPGKAESVVSLTSQCSYSSTIVHVGDKKPQPELETVEDVASGPESQDDAAGGLSQEKGSLQKLGLTKEVLAAHTQREEQGFLQRFREVSRLGALQAHCQNYLQERSRAPASDRGLRNASGIESSWKKTGKNRKLKSKRVKTRDSSESTGSGGPVSHRPPLVGLNATAWSPSDTSQSSCPSAPFPAPVPAYPLPVFPAPGIVSTPGTVVAPPAAAHTGFTMPVVPMGTQPEFAVQPLPFAAPLAPVMAFMLPSYPFPPATPNLPQAFFPSQPHFPAHPTLASEITPASQAEFPSRTSMLRQPCACPVTPPAGTVALGRASPPLFQSRGSSPLQLNLLQLEEAPESSTGAAGTLGTTGTAASGLDCTSGASRDRQPKAPPTCSEPSDTQNSDAISTSSDLLNLLLGEDLCSATGSALSRSGASATSDSLGSSSLGCDTSRSGAGSSDTSHTSKYFGSIDSSENNHKAKMITDTEESEQFIKYVLQDPIWLLMANTDDNIMMTYQLPSRDLQAVLKEDQEKLKLLQRSQPHFTEGQRRELREVHPWVHTGGLPTAIDVTGCVYCESEEKGNLCLPYEEDSPSLGLCDTSEAKEEESGQLANPRKEAQT.

The disordered stretch occupies residues 1–59 (MNGYVDFSPSPTSPTQEPGEPQPTQAVLQEDVDMSSGSSGNENCSTGRDSQGSDCDDSG). Over residues 8 to 25 (SPSPTSPTQEPGEPQPTQ) the composition is skewed to low complexity. A compositionally biased stretch (polar residues) spans 35–53 (SSGSSGNENCSTGRDSQGS). The Nuclear export signal 1 motif lies at 109–118 (LIRTLRELKV). A PAS 1 domain is found at 179 to 246 (ITSEYIVKNS…FHSYTTPYKL (68 aa)). The LXXLL motif lies at 306 to 310 (LCCLL). In terms of domain architecture, PAS 2 spans 319-385 (YEAPRIPPEK…MLAIHKKILQ (67 aa)). The 44-residue stretch at 393-436 (YSPIRFRTRNGEYITLDTSWSSFINPWSRKISFIIGRHKVRVGP) folds into the PAC domain. The short motif at 460 to 469 (LTEQIHRLLM) is the Nuclear export signal 2 element. Residues 471 to 567 (PVPHSGSSGY…RDSSGASLPK (97 aa)) are disordered. Residues 478–482 (SGYGS) are important for protein stability. Composition is skewed to polar residues over residues 493–504 (MSQTSSSDSNGQ) and 518–528 (SGKSQSKSHFS). The tract at residues 510–709 (RRSGIFKTSG…DAAGGLSQEK (200 aa)) is CSNK1E binding domain. Ser-525, Ser-528, Ser-531, Ser-538, and Ser-544 each carry phosphoserine. A compositionally biased stretch (polar residues) spans 541–555 (EMQSSPPAQVRSVTT). Thr-554 carries the phosphothreonine modification. A phosphoserine mark is found at Ser-659, Ser-693, Ser-697, Ser-706, Ser-758, and Ser-763. 2 disordered regions span residues 678-706 (DKKPQPELETVEDVASGPESQDDAAGGLS) and 757-833 (RSRA…CPSA). The Nuclear localization signal signature appears at 778-794 (KKTGKNRKLKSKRVKTR). The span at 779–792 (KTGKNRKLKSKRVK) shows a compositional bias: basic residues. Residues 821–832 (SPSDTSQSSCPS) show a composition bias toward low complexity. Thr-858 is modified (phosphothreonine). Residues 882–1067 (EFAVQPLPFA…DLCSATGSAL (186 aa)) form an interaction with PPARG region. Ser-939 bears the Phosphoserine mark. A Phosphothreonine modification is found at Thr-964. Ser-971 is subject to Phosphoserine. Residues 983-990 (LQLNLLQL) carry the Nuclear export signal 3 motif. The disordered stretch occupies residues 993-1044 (APESSTGAAGTLGTTGTAASGLDCTSGASRDRQPKAPPTCSEPSDTQNSDAI). The span at 996-1014 (SSTGAAGTLGTTGTAASGL) shows a compositional bias: low complexity. Over residues 1033 to 1044 (SEPSDTQNSDAI) the composition is skewed to polar residues. The LXXLL signature appears at 1051–1055 (LNLLL). The span at 1070-1089 (SGASATSDSLGSSSLGCDTS) shows a compositional bias: low complexity. The segment at 1070–1108 (SGASATSDSLGSSSLGCDTSRSGAGSSDTSHTSKYFGSI) is disordered. Polar residues predominate over residues 1090–1108 (RSGAGSSDTSHTSKYFGSI). Residue Ser-1126 is modified to Phosphoserine. Residues 1157–1257 (SRDLQAVLKE…LANPRKEAQT (101 aa)) form a CRY binding domain region. A disordered region spans residues 1226–1257 (EEDSPSLGLCDTSEAKEEESGQLANPRKEAQT).

In terms of assembly, homodimer. Component of the circadian core oscillator, which includes the CRY proteins, CLOCK or NPAS2, BMAL1 or BMAL2, CSNK1D and/or CSNK1E, TIMELESS, and the PER proteins. Interacts with CLOCK-BMAL1 (off DNA). Interacts directly with PER1 and PER3, and through a C-terminal domain, with CRY1 and CRY2. Interacts (via PAS 2 domain) with TIMELESS. Interacts with NFIL3. Different large complexes have been identified with different repressive functions. The core of PER complexes is composed of at least PER1, PER2, PER3, CRY1, CRY2, CSNK1D and/or CSNK1E. The large PER complex involved in the repression of transcriptional termination is composed of at least PER2, CDK9, DDX5, DHX9, NCBP1 and POLR2A (active). The large PER complex involved in the histone deacetylation is composed of at least HDAC1, PER2, SFPQ and SIN3A. The large PER complex involved in the histone methylation is composed of at least PER2, CBX3, TRIM28, SUV39H1 and/or SUV39H2; CBX3 mediates the formation of the complex. Interacts with SETX; the interaction inhibits termination of circadian target genes. Interacts with the nuclear receptors HNF4A, NR1D1, NR4A2, RORA, PPARA, PPARG and THRA; the interaction with at least PPARG is ligand dependent. Interacts with PML. Interacts (phosphorylated) with BTRC and FBXW11; the interactions trigger proteasomal degradation. Interacts with NONO and SFPQ. Interacts with CAVIN3. Interacts with MAGEL2. Interacts with MAP1LC3B. Interacts with HNF4A. Post-translationally, acetylated. Deacetylated by SIRT1, resulting in decreased protein stability. Deacetylated by SIRT6, preventing its degradation by the proteasome, resulting in increased protein stability. In terms of processing, phosphorylated by CSNK1E and CSNK1D. Phosphorylation results in PER2 protein degradation. May be dephosphorylated by PP1. Ubiquitinated, leading to its proteasomal degradation. Ubiquitination may be inhibited by CRY1. In terms of tissue distribution, expressed in all tissues examined including eye, brain, heart, lung, spleen, liver, pancreas and kidney. In the CNS, highly expressed in the SCN, internal granular layer of granular cells of the olfactory bulb, tuberculum olfactorium, piriform cortex, gyrus dentatus of the hippocampus, cerebellum, pars tuberalis/median eminence, and pituitary, and moderately in the tenia tecta, caudate putamen, accumbens nucleus, superior and inferior colliculus and pineal gland.

It is found in the nucleus. Its subcellular location is the cytoplasm. The protein localises to the perinuclear region. In terms of biological role, transcriptional repressor which forms a core component of the circadian clock. The circadian clock, an internal time-keeping system, regulates various physiological processes through the generation of approximately 24 hour circadian rhythms in gene expression, which are translated into rhythms in metabolism and behavior. It is derived from the Latin roots 'circa' (about) and 'diem' (day) and acts as an important regulator of a wide array of physiological functions including metabolism, sleep, body temperature, blood pressure, endocrine, immune, cardiovascular, and renal function. Consists of two major components: the central clock, residing in the suprachiasmatic nucleus (SCN) of the brain, and the peripheral clocks that are present in nearly every tissue and organ system. Both the central and peripheral clocks can be reset by environmental cues, also known as Zeitgebers (German for 'timegivers'). The predominant Zeitgeber for the central clock is light, which is sensed by retina and signals directly to the SCN. The central clock entrains the peripheral clocks through neuronal and hormonal signals, body temperature and feeding-related cues, aligning all clocks with the external light/dark cycle. Circadian rhythms allow an organism to achieve temporal homeostasis with its environment at the molecular level by regulating gene expression to create a peak of protein expression once every 24 hours to control when a particular physiological process is most active with respect to the solar day. Transcription and translation of core clock components (CLOCK, NPAS2, BMAL1, BMAL2, PER1, PER2, PER3, CRY1 and CRY2) plays a critical role in rhythm generation, whereas delays imposed by post-translational modifications (PTMs) are important for determining the period (tau) of the rhythms (tau refers to the period of a rhythm and is the length, in time, of one complete cycle). A diurnal rhythm is synchronized with the day/night cycle, while the ultradian and infradian rhythms have a period shorter and longer than 24 hours, respectively. Disruptions in the circadian rhythms contribute to the pathology of cardiovascular diseases, cancer, metabolic syndrome and aging. A transcription/translation feedback loop (TTFL) forms the core of the molecular circadian clock mechanism. Transcription factors, CLOCK or NPAS2 and BMAL1 or BMAL2, form the positive limb of the feedback loop, act in the form of a heterodimer and activate the transcription of core clock genes and clock-controlled genes (involved in key metabolic processes), harboring E-box elements (5'-CACGTG-3') within their promoters. The core clock genes: PER1/2/3 and CRY1/2 which are transcriptional repressors form the negative limb of the feedback loop and interact with the CLOCK|NPAS2-BMAL1|BMAL2 heterodimer inhibiting its activity and thereby negatively regulating their own expression. This heterodimer also activates nuclear receptors NR1D1/2 and RORA/B/G, which form a second feedback loop and which activate and repress BMAL1 transcription, respectively. PER1 and PER2 proteins transport CRY1 and CRY2 into the nucleus with appropriate circadian timing, but also contribute directly to repression of clock-controlled target genes through interaction with several classes of RNA-binding proteins, helicases and others transcriptional repressors. PER appears to regulate circadian control of transcription by at least three different modes. First, interacts directly with the CLOCK-BMAL1 at the tail end of the nascent transcript peak to recruit complexes containing the SIN3-HDAC that remodel chromatin to repress transcription. Second, brings H3K9 methyltransferases such as SUV39H1 and SUV39H2 to the E-box elements of the circadian target genes, like PER2 itself or PER1. The recruitment of each repressive modifier to the DNA seems to be very precisely temporally orchestrated by the large PER complex, the deacetylases acting before than the methyltransferases. Additionally, large PER complexes are also recruited to the target genes 3' termination site through interactions with RNA-binding proteins and helicases that may play a role in transcription termination to regulate transcription independently of CLOCK-BMAL1 interactions. Recruitment of large PER complexes to the elongating polymerase at PER and CRY termination sites inhibited SETX action, impeding RNA polymerase II release and thereby repressing transcriptional reinitiation. May propagate clock information to metabolic pathways via the interaction with nuclear receptors. Coactivator of PPARA and corepressor of NR1D1, binds rhythmically at the promoter of nuclear receptors target genes like BMAL1 or G6PC1. Directly and specifically represses PPARG proadipogenic activity by blocking PPARG recruitment to target promoters and thereby transcriptional activation. Required for fatty acid and lipid metabolism, is involved as well in the regulation of circulating insulin levels. Plays an important role in the maintenance of cardiovascular functions through the regulation of NO and vasodilatatory prostaglandins production in aortas. Controls circadian glutamate uptake in synaptic vesicles through the regulation of VGLUT1 expression. May also be involved in the regulation of inflammatory processes. Represses the CLOCK-BMAL1 induced transcription of BHLHE40/DEC1 and ATF4. Negatively regulates the formation of the TIMELESS-CRY1 complex by competing with TIMELESS for binding to CRY1. The polypeptide is Period circadian protein homolog 2 (Rattus norvegicus (Rat)).